The following is a 202-amino-acid chain: Protein lin-28 homolog A (202 aa).

Disordered stretches follow at residues Met-1–His-33 and Ser-100–Gly-128. The segment covering Glu-18 to Ser-29 has biased composition (acidic residues). In terms of domain architecture, CSD spans His-33–Pro-106. The tract at residues Gly-107–Arg-130 is flexible linker. 2 CCHC-type zinc fingers span residues Asp-129–Leu-146 and Lys-151–Ile-168. Zn(2+)-binding residues include Cys-131, Cys-134, His-139, Cys-144, Cys-153, Cys-156, His-161, and Cys-166. Positions Ala-170–Asp-202 are disordered. Polar residues predominate over residues Gln-171 to Thr-185. A Phosphoserine modification is found at Ser-174.

This sequence belongs to the lin-28 family. As to quaternary structure, monomer.

Its subcellular location is the cytoplasm. It is found in the rough endoplasmic reticulum. It localises to the P-body. The protein localises to the stress granule. The protein resides in the nucleus. Its subcellular location is the nucleolus. Functionally, RNA-binding protein that inhibits processing of pre-let-7 miRNAs and regulates translation of mRNAs that control developmental timing, pluripotency and metabolism. Seems to recognize a common structural G-quartet (G4) feature in its miRNA and mRNA targets. 'Translational enhancer' that drives specific mRNAs to polysomes and increases the efficiency of protein synthesis. Its association with the translational machinery and target mRNAs results in an increased number of initiation events per molecule of mRNA and, indirectly, in mRNA stabilization. Suppressor of microRNA (miRNA) biogenesis, including that of let-7. Binds specific target miRNA precursors (pre-miRNAs), recognizing an 5'-GGAG-3' motif found in their terminal loop, and recruits uridylyltransferase. This results in the terminal uridylation of target pre-miRNAs. Uridylated pre-miRNAs fail to be processed by Dicer and undergo degradation. Localized to the periendoplasmic reticulum area, binds to a large number of spliced mRNAs and inhibits the translation of mRNAs destined for the ER, reducing the synthesis of transmembrane proteins, ER or Golgi lumen proteins, and secretory proteins. Binds to and enhances the translation of mRNAs for several metabolic enzymes, increasing glycolysis and oxidative phosphorylation. Which, with the let-7 repression may enhance tissue repair in adult tissue. In Danio rerio (Zebrafish), this protein is Protein lin-28 homolog A (lin28a).